A 219-amino-acid polypeptide reads, in one-letter code: Oligoribonuclease (219 aa).

Positions 30 to 193 constitute an Exonuclease domain; the sequence is LVWLDMEMTG…ADIVESIEEL (164 aa). Tyr151 is a catalytic residue.

Belongs to the oligoribonuclease family.

The protein resides in the cytoplasm. In terms of biological role, 3'-to-5' exoribonuclease specific for small oligoribonucleotides. This chain is Oligoribonuclease, found in Ralstonia nicotianae (strain ATCC BAA-1114 / GMI1000) (Ralstonia solanacearum).